The sequence spans 213 residues: U1 small nuclear ribonucleoprotein C (213 aa).

Residues 4-36 (YYCDYCDTYLTHDSPSVRKQHNAGYKHKANVRS) form a Matrin-type zinc finger. The segment covering 143–166 (APSMPMPPLNSLPRPPTMNVPPAV) has biased composition (pro residues). Positions 143–213 (APSMPMPPLN…INAQGPEANH (71 aa)) are disordered. The segment covering 167-180 (PGSTSTPTSGGAPS) has biased composition (low complexity).

The protein belongs to the U1 small nuclear ribonucleoprotein C family. U1 snRNP is composed of the 7 core Sm proteins B/B', D1, D2, D3, E, F and G that assemble in a heptameric protein ring on the Sm site of the small nuclear RNA to form the core snRNP, and at least 3 U1 snRNP-specific proteins U1-70K, U1-A and U1-C. U1-C interacts with U1 snRNA and the 5' splice-site region of the pre-mRNA.

It localises to the nucleus. Its function is as follows. Component of the spliceosomal U1 snRNP, which is essential for recognition of the pre-mRNA 5' splice-site and the subsequent assembly of the spliceosome. U1-C is directly involved in initial 5' splice-site recognition for both constitutive and regulated alternative splicing. The interaction with the 5' splice-site seems to precede base-pairing between the pre-mRNA and the U1 snRNA. Stimulates commitment or early (E) complex formation by stabilizing the base pairing of the 5' end of the U1 snRNA and the 5' splice-site region. This Vitis vinifera (Grape) protein is U1 small nuclear ribonucleoprotein C.